A 568-amino-acid chain; its full sequence is Acyl-CoA ligase gloD (568 aa).

ATP-binding positions include 211–219 (TSGTSGFLK), 352–357 (PGYGLT), Asp436, Arg455, and Lys553. Positions 282–352 (DMQIALKSVQ…QLCPEWEINP (71 aa)) are SBD1. Residues 353–415 (GYGLTESFVC…VRSPSVMKEY (63 aa)) form an SBD2 region.

The protein belongs to the ATP-dependent AMP-binding enzyme family.

It functions in the pathway mycotoxin biosynthesis. Functionally, acyl-CoA ligase; part of the gene cluster that mediates the biosynthesis of pneumocandins, lipohexapeptides of the echinocandin family that prevent fungal cell wall formation by non-competitive inhibition of beta-1,3-glucan synthase. The 10,12-dimethylmyristoyl side chain is synthesized by the reducing polyketide synthase gloL/GLPKS4. The thioesterase gloN/GLHYD exclusively interacts with gloL/GLPKS4 to maintain turnover of the polyketide side chain. The 10R,12S-dimethylmyristic acid is then transferred to the first thiolation domain of the nonribosomal peptide synthetase gloA/GLNRPS4 by the acyl-AMP ligase gloD/GLligase, followed by its acylation to L-ornithine to trigger elongation of the cyclic hexapeptide. L-ornithine, 4R-hydroxyl-L-proline (generated from L-proline by the dioxygenase gloF/GLOXY2), 3S-hydroxyl-L-homotyrosine (generated by gloG/GLHtyB, gloH/GLHtyA, gloI/GLHtyC, gloJ/GLHtyD and hydroxylated at C-3 by the dioxygenase gloM/GLOXY1), 3R-hydroxyl-L-glutamine (generated from L-glutamine probably by the dioxygenase gloE/GLOXY3) and 3S-hydroxyl-L-proline (generated from L-proline by the dioxygenase gloF/GLOXY2 to yield pneumocandin B0), or 3S-hydroxyl-4S-methyl-L-proline (generated from L-leucine by the dioxygenase gloC/GLOXY4 to yield pneumocandin A0) are sequentially added to the growing chain. The last C domain of gloA/GLNRPS4 is proposed to be responsible for cyclization by condensation to form the peptide bond between L-ornithine and 3S-hydroxyl-4S-methyl-L-proline (for pneumocandin A0) or 3S-hydroxyl-L-proline (for pneumocandin B0). Finally, the subsequent C-4 hydroxylation of 3S-hydroxyl-L-homotyrosine and L-ornithine dihydroxylation at C-4 and C-5 are performed by the cytochrome P450 monooxygenases gloP/GLP450-1 and gloO/GLP450-2, respectively. The protein is Acyl-CoA ligase gloD of Glarea lozoyensis (strain ATCC 20868 / MF5171).